The sequence spans 521 residues: Bifunctional purine biosynthesis protein PurH (521 aa).

The MGS-like domain maps to 1–147; sequence MGEITRALIS…KNWEGVTVLV (147 aa).

This sequence belongs to the PurH family.

The enzyme catalyses (6R)-10-formyltetrahydrofolate + 5-amino-1-(5-phospho-beta-D-ribosyl)imidazole-4-carboxamide = 5-formamido-1-(5-phospho-D-ribosyl)imidazole-4-carboxamide + (6S)-5,6,7,8-tetrahydrofolate. It carries out the reaction IMP + H2O = 5-formamido-1-(5-phospho-D-ribosyl)imidazole-4-carboxamide. The protein operates within purine metabolism; IMP biosynthesis via de novo pathway; 5-formamido-1-(5-phospho-D-ribosyl)imidazole-4-carboxamide from 5-amino-1-(5-phospho-D-ribosyl)imidazole-4-carboxamide (10-formyl THF route): step 1/1. Its pathway is purine metabolism; IMP biosynthesis via de novo pathway; IMP from 5-formamido-1-(5-phospho-D-ribosyl)imidazole-4-carboxamide: step 1/1. This chain is Bifunctional purine biosynthesis protein PurH, found in Acidithiobacillus ferrooxidans (strain ATCC 53993 / BNL-5-31) (Leptospirillum ferrooxidans (ATCC 53993)).